The chain runs to 296 residues: Light-inducible protein CPRF3 (296 aa).

3 disordered regions span residues 1 to 27, 98 to 165, and 190 to 223; these read MSDGEEGTPMKHPKPASSVEEAPITTT, PNLA…GSLE, and RVNDERELKRQRRKQSNRESARRSRLRKQAKSDE. A compositionally biased stretch (basic and acidic residues) spans 107-117; that stretch reads VGRKISDEKGR. The segment covering 145 to 156 has biased composition (low complexity); the sequence is SSSDNDCPSLSS. The region spanning 196–259 is the bZIP domain; it reads ELKRQRRKQS…AEVTSENHSI (64 aa). The tract at residues 198–220 is basic motif; that stretch reads KRQRRKQSNRESARRSRLRKQAK. The leucine-zipper stretch occupies residues 224–245; the sequence is LQERLDNLSKENRILRKNLQRI.

This sequence belongs to the bZIP family. As to quaternary structure, binds DNA as a dimer.

It is found in the nucleus. Functionally, binds to the G-box-like motif (5'-ACGTGGC-3') of the chalcone synthase (CHS) gene promoter. G-box and G-box-like motifs are defined in promoters of certain plant genes which are regulated by such diverse stimuli as light-induction or hormone control. This Petroselinum crispum (Parsley) protein is Light-inducible protein CPRF3 (CPRF3).